Here is a 758-residue protein sequence, read N- to C-terminus: Dolichyl-phosphooligosaccharide-protein glycotransferase 2 (758 aa).

Residues 1–6 (MKRRYS) lie on the Cytoplasmic side of the membrane. Residues 7 to 27 (ILIILLVAIFYRMITFRFKYL) form a helical membrane-spanning segment. Residues 28–92 (LGYDPYFHLA…KVFGVSLTTT (65 aa)) lie on the Extracellular side of the membrane. The short motif at 29–31 (GYD) is the DXD motif 1 element. Residue aspartate 31 participates in Mn(2+) binding. The helical transmembrane segment at 93-113 (FKITPVIFGVLTVIFLYLSLL) threads the bilayer. Residues 114–120 (KLYDEKR) lie on the Cytoplasmic side of the membrane. Residues 121-141 (AFFGGFFLAISYGHVFRSMAN) traverse the membrane as a helical segment. Residues 142-145 (YYRG) are Extracellular-facing. 2 residues coordinate Mn(2+): arginine 144 and aspartate 146. The DXD motif 2 motif lies at 144–146 (RGD). Residues 146–166 (DNYMLFWYSVALLGISLALGI) traverse the membrane as a helical segment. The Cytoplasmic portion of the chain corresponds to 167–175 (KKGKWKYKR). 2 consecutive transmembrane segments (helical) span residues 176-196 (LIFYTLPVLASGFSAIFWQAY) and 197-217 (YPIFAFLLSNALLLAVGAFIL). The Cytoplasmic portion of the chain corresponds to 218–226 (KKDKYLLDS). A helical transmembrane segment spans residues 227–247 (IILILSTAFGVLLANYLGGIF). Residues 248–281 (GYGMLGYAKWLGKSVAKKLGLEFGYLKDVYLILH) lie on the Extracellular side of the membrane. A helical transmembrane segment spans residues 282-302 (LKYLVPISLSFVLVLILLGFL). Residues 303–310 (TKDIRIRS) lie on the Cytoplasmic side of the membrane. The helical transmembrane segment at 311-331 (LFLGIASFIGIIILFKRFEAL) threads the bilayer. The Extracellular portion of the chain corresponds to 332–352 (KELSTGFGIFKEAPILETQPT). Positions 340-343 (IFKE) match the TIXE motif motif. Residues 353-373 (SFKDLWAAFSLSFFLTPLFFI) form a helical membrane-spanning segment. Topologically, residues 374–379 (RFKKPR) are cytoplasmic. The chain crosses the membrane as a helical span at residues 380–400 (VEDFLTLGLIIPSVYMLKTWT). Residue arginine 401 is a topological domain, extracellular. Position 401 (arginine 401) interacts with a glycophospholipid. A helical membrane pass occupies residues 402-422 (FLFIGSMAIAIMSGIGIVELY). Over 423 to 433 (EAIKPRLNGKK) the chain is Cytoplasmic. A helical transmembrane segment spans residues 434-454 (ALATGIITLVILPGVIAGLSF). Topologically, residues 455–758 (KEVCSLHPEM…DRGVFRLSYN (304 aa)) are extracellular. Residues 488-490 (WWD) form an interacts with target acceptor peptide in protein substrate region. A WWDYG motif motif is present at residues 488 to 492 (WWDWG). The DK motif motif lies at 540–547 (DFLKFGAI).

The protein belongs to the STT3 family. Mn(2+) serves as cofactor. Mg(2+) is required as a cofactor.

It is found in the cell membrane. It carries out the reaction an archaeal dolichyl phosphooligosaccharide + [protein]-L-asparagine = an archaeal dolichyl phosphate + a glycoprotein with the oligosaccharide chain attached by N-beta-D-glycosyl linkage to a protein L-asparagine.. The protein operates within protein modification; protein glycosylation. Oligosaccharyl transferase (OST) that catalyzes the initial transfer of a defined glycan (ManNAcXyl(2)GlcAMan(2)GalNAc in Pyrococcus) from the lipid carrier dolichol-monophosphate to an asparagine residue within an Asn-X-Ser/Thr consensus motif in nascent polypeptide chains, the first step in protein N-glycosylation. In Pyrococcus horikoshii (strain ATCC 700860 / DSM 12428 / JCM 9974 / NBRC 100139 / OT-3), this protein is Dolichyl-phosphooligosaccharide-protein glycotransferase 2 (aglB2).